Here is a 175-residue protein sequence, read N- to C-terminus: Protein-export protein SecB (175 aa).

Belongs to the SecB family. As to quaternary structure, homotetramer, a dimer of dimers. One homotetramer interacts with 1 SecA dimer.

It is found in the cytoplasm. Its function is as follows. One of the proteins required for the normal export of preproteins out of the cell cytoplasm. It is a molecular chaperone that binds to a subset of precursor proteins, maintaining them in a translocation-competent state. It also specifically binds to its receptor SecA. This is Protein-export protein SecB from Anaplasma marginale (strain Florida).